The chain runs to 546 residues: Light-independent protochlorophyllide reductase subunit B (546 aa).

Asp-36 is a binding site for [4Fe-4S] cluster. Asp-287 serves as the catalytic Proton donor. 422–423 (GL) serves as a coordination point for substrate. A disordered region spans residues 443-501 (PSHLSAHRPTGEAVGDAVGEPPAAPRDQAAPAATLDGSAAQSDPARTTPPGAPSWEDSA).

The protein belongs to the ChlB/BchB/BchZ family. In terms of assembly, protochlorophyllide reductase is composed of three subunits; BchL, BchN and BchB. Forms a heterotetramer of two BchB and two BchN subunits. [4Fe-4S] cluster serves as cofactor.

It catalyses the reaction chlorophyllide a + oxidized 2[4Fe-4S]-[ferredoxin] + 2 ADP + 2 phosphate = protochlorophyllide a + reduced 2[4Fe-4S]-[ferredoxin] + 2 ATP + 2 H2O. It functions in the pathway porphyrin-containing compound metabolism; bacteriochlorophyll biosynthesis (light-independent). Functionally, component of the dark-operative protochlorophyllide reductase (DPOR) that uses Mg-ATP and reduced ferredoxin to reduce ring D of protochlorophyllide (Pchlide) to form chlorophyllide a (Chlide). This reaction is light-independent. The NB-protein (BchN-BchB) is the catalytic component of the complex. The chain is Light-independent protochlorophyllide reductase subunit B from Rhodospirillum rubrum (strain ATCC 11170 / ATH 1.1.1 / DSM 467 / LMG 4362 / NCIMB 8255 / S1).